The chain runs to 31 residues: Cyclotide mden-J (31 aa).

The cyclopeptide (Gly-Asn) cross-link spans 1–31; sequence GSIPCGESCVYIPCISSIVGCACKSKVCYKN. Disulfide bonds link C5/C21, C9/C23, and C14/C28.

It belongs to the cyclotide family. Bracelet subfamily. This is a cyclic peptide.

Functionally, probably participates in a plant defense mechanism. In Melicytus dentatus (Tree violet), this protein is Cyclotide mden-J.